A 605-amino-acid chain; its full sequence is Pyruvate decarboxylase 1 (605 aa).

Residues aspartate 67 and histidine 154 each coordinate substrate. Positions aspartate 432–isoleucine 514 are thiamine pyrophosphate binding. Mg(2+) is bound by residues aspartate 482, asparagine 509, and glycine 511. Substrate is bound at residue glutamate 515.

Belongs to the TPP enzyme family. Homotetramer. A metal cation is required as a cofactor. Thiamine diphosphate serves as cofactor.

The enzyme catalyses a 2-oxocarboxylate + H(+) = an aldehyde + CO2. In Oryza sativa subsp. indica (Rice), this protein is Pyruvate decarboxylase 1 (PDC1).